Consider the following 738-residue polypeptide: Integrin beta-2-like protein (738 aa).

A signal peptide spans 1–22 (MLGQCTLLPVLAGLLSLESALS). Residues 23–671 (QLCTKDNVST…LVCAEISNTT (649 aa)) lie on the Extracellular side of the membrane. The region spanning 24–74 (LCTKDNVSTCQDCIRSGPSCAWCQKLNFTGRGEPDSVRCDTPEQLLLKGCT) is the PSI domain. Intrachain disulfides connect Cys25/Cys419, Cys33/Cys43, Cys36/Cys73, Cys46/Cys62, Cys218/Cys258, Cys358/Cys372, Cys421/Cys439, Cys431/Cys442, Cys444/Cys453, Cys455/Cys486, Cys469/Cys484, Cys478/Cys489, Cys491/Cys506, Cys508/Cys531, Cys513/Cys529, Cys521/Cys534, Cys536/Cys545, Cys547/Cys570, Cys554/Cys568, Cys562/Cys573, Cys575/Cys584, Cys594/Cys603, and Cys600/Cys664. N-linked (GlcNAc...) asparagine glycosylation is present at Asn29. 8 N-linked (GlcNAc...) asparagine glycosylation sites follow: Asn50, Asn102, Asn173, Asn226, Asn252, Asn342, Asn360, and Asn386. The 204-residue stretch at 126–329 (SVDLYFLMGL…DSSNVAQLIR (204 aa)) folds into the VWFA domain. I-EGF domains lie at 421-454 (CQEQ…KNCE), 455-507 (CQTQ…QYCE), 508-546 (CNNV…SACQ), and 547-585 (CRMS…PLCE). N-linked (GlcNAc...) asparagine glycosylation is present at Asn473. N-linked (GlcNAc...) asparagine glycans are attached at residues Asn627 and Asn669. The chain crosses the membrane as a helical span at residues 672–692 (ILLGVIVGVLLAVIFLLVYCM). Residues 693–738 (VYLKGTQKAAKLPRKGGAQSTLAQQPHFQEPHHVEPVWNQERQGTQ) lie on the Cytoplasmic side of the membrane. The disordered stretch occupies residues 709-738 (GAQSTLAQQPHFQEPHHVEPVWNQERQGTQ). The segment covering 710–719 (AQSTLAQQPH) has biased composition (polar residues).

The protein belongs to the integrin beta chain family. In terms of assembly, monomer and homodimer. Unlike integrin beta chains, no alpha chain partner has yet been found. N-glycosylated. In terms of tissue distribution, expressed predominantly in maturing and mature neutrophils.

The protein resides in the cell membrane. Functionally, during inflammatory stimulation, plays a role in retaining Cxcl13-expressing cells at the site of the inflammatory response. This Mus musculus (Mouse) protein is Integrin beta-2-like protein.